The chain runs to 342 residues: Ferredoxin--NADP reductase (342 aa).

Residues Cys17, Asp36, Gln44, Tyr49, Ile89, Phe124, Asp289, and Thr330 each coordinate FAD.

Belongs to the ferredoxin--NADP reductase type 2 family. Homodimer. The cofactor is FAD.

The catalysed reaction is 2 reduced [2Fe-2S]-[ferredoxin] + NADP(+) + H(+) = 2 oxidized [2Fe-2S]-[ferredoxin] + NADPH. The sequence is that of Ferredoxin--NADP reductase from Rhodopseudomonas palustris (strain HaA2).